Consider the following 325-residue polypeptide: Glutarate 2-hydroxylase (325 aa).

Residues H160, D162, and H292 each contribute to the Fe cation site.

The protein belongs to the glutarate hydroxylase family. In terms of assembly, homotetramer. Requires Fe(2+) as cofactor.

It catalyses the reaction glutarate + 2-oxoglutarate + O2 = (S)-2-hydroxyglutarate + succinate + CO2. It functions in the pathway amino-acid degradation. Its function is as follows. Acts as an alpha-ketoglutarate-dependent dioxygenase catalyzing hydroxylation of glutarate (GA) to L-2-hydroxyglutarate (L2HG). Functions in a L-lysine degradation pathway that proceeds via cadaverine, glutarate and L-2-hydroxyglutarate. In Escherichia coli O6:H1 (strain CFT073 / ATCC 700928 / UPEC), this protein is Glutarate 2-hydroxylase.